A 464-amino-acid chain; its full sequence is MAAAAASSCGGAGCGPHCSSSASAAAVEDAAAAAAEKVGRLSLSRECGKCGGGAAAVAVAGGLGLCGECFRANLLGKFKLAVTSNAMVRPTDSVLLAFSGGPASRVALQFIHEMRCKAIESWDVSNSQALPVFGVGVAFVDESVLCSKPRDEIEMAIEDIRSIVSSLSTGVKAMHIVRLEDVFSTESEDGERRLREAVDMIGDDTGREDFLRCLRMLSLQKIAMENGYAKIMLGSCASAIACHVLSATVKGQGYSLPADVQYVDTRWEIPVVLPLRDCLAQELTLLCELDSLKTQQHLDRPSNGINSLVASFIKRLREENPSREHTIVRTAQKLKPFSFNKFSADGYHDFLPSRLRPKFQKVDSDESTFSEILCLMCGSPFSESELQNLESTKHKAQKKIDLYTAHCCQSCYFQILPAGENLNEHFFSLLPKLWTGKMDTISDSHSLLRDQIEEYLLEENDDGN.

Belongs to the CTU2/NCS2 family.

It is found in the cytoplasm. It functions in the pathway tRNA modification; 5-methoxycarbonylmethyl-2-thiouridine-tRNA biosynthesis. In terms of biological role, plays a central role in 2-thiolation of mcm(5)S(2)U at tRNA wobble positions of tRNA(Lys), tRNA(Glu) and tRNA(Gln). May act by forming a heterodimer with NCS6/CTU1 that ligates sulfur from thiocarboxylated URM1 onto the uridine of tRNAs at wobble position. The polypeptide is Cytoplasmic tRNA 2-thiolation protein 2 (Oryza sativa subsp. indica (Rice)).